The primary structure comprises 1091 residues: ATP-dependent RNA helicase ddx54 (1091 aa).

2 disordered regions span residues 1 to 63 (MVKP…KEEF) and 150 to 231 (DNSN…KTGG). The segment covering 26–35 (MKGKKLETKS) has biased composition (basic and acidic residues). A compositionally biased stretch (polar residues) spans 150 to 161 (DNSNFDNNGDQF). A compositionally biased stretch (basic and acidic residues) spans 196–207 (KKEEIESSEKFE). Residues 230-258 (GGFQSMDLTKNLLKAILKKGFNVPTPIQR) carry the Q motif motif. The Helicase ATP-binding domain maps to 261–433 (IPMILDGHDI…RAGLNNPKLI (173 aa)). 274–281 (ARTGSGKT) contacts ATP. Positions 381-384 (DEAD) match the DEAD box motif. Residues 478-632 (TETTTTTTTN…KFQYEGQTIN (155 aa)) form the Helicase C-terminal domain. 2 disordered regions span residues 801–896 (EEML…TPEN) and 933–1091 (KRKG…KSRK). The segment covering 814–823 (DNNKDIKMNE) has biased composition (basic and acidic residues). Residues 824-855 (NDDENDDDDEEGENDDDEEEENEKDEDDEEDE) show a composition bias toward acidic residues. Basic and acidic residues-rich tracts occupy residues 865–874 (ESSDKNDNNK), 944–975 (DADRKNSKKLVRNEAGKLVEAKKSHKGYEEWK), and 1008–1019 (QGREKEKKDNKA). Residues 1020–1029 (SHAKGSHGLK) are compositionally biased toward basic residues. Positions 1031–1052 (RPSELKDKNQISKNRSEKERKM) are enriched in basic and acidic residues. Residues 1068–1079 (SGGGGGGKGSKF) are compositionally biased toward gly residues.

It belongs to the DEAD box helicase family. DDX54/DBP10 subfamily.

It is found in the nucleus. The protein resides in the nucleolus. It carries out the reaction ATP + H2O = ADP + phosphate + H(+). Its function is as follows. ATP-binding RNA helicase which may be involved in the ribosome biogenesis. This is ATP-dependent RNA helicase ddx54 (helA) from Dictyostelium discoideum (Social amoeba).